The following is a 611-amino-acid chain: Zinc metalloproteinase nas-31 (611 aa).

An N-terminal signal peptide occupies residues 1–17 (MILQLLFYSLFTHLAVS). The propeptide occupies 18–158 (QIDVNQALNQ…TVSTASRARR (141 aa)). N53 and N67 each carry an N-linked (GlcNAc...) asparagine glycan. Over residues 82-95 (NAGTNQENGATEQQ) the composition is skewed to polar residues. The interval 82–103 (NAGTNQENGATEQQKPLREKPR) is disordered. One can recognise a Peptidase M12A domain in the interval 159–354 (QAYRDRYYPS…SMMNEHYKCK (196 aa)). N-linked (GlcNAc...) asparagine glycosylation is present at N200. Cystine bridges form between C203-C353, C224-C243, C357-C376, C379-C390, C397-C428, C455-C476, C532-C564, C539-C557, and C548-C561. H251 is a Zn(2+) binding site. E252 is an active-site residue. Positions 255 and 261 each coordinate Zn(2+). In terms of domain architecture, EGF-like spans 340 to 396 (GFYDISMMNEHYKCKELCPAASSAQCKNGGFPSPRNCAICICPSGYGGILCDQRPPG). Residues 397 to 516 (CGDSVTATTT…LEYRAVTPSV (120 aa)) enclose the CUB domain. N424 is a glycosylation site (N-linked (GlcNAc...) asparagine). The region spanning 532-564 (CQDLHPNCDFYKFFGMCRSKKIRSNCKFTCHDC) is the ShKT domain.

Zn(2+) is required as a cofactor. Expressed in excretory cell and in amphid and phasmid sheath glia.

The protein resides in the secreted. Metalloprotease. This chain is Zinc metalloproteinase nas-31 (nas-31), found in Caenorhabditis elegans.